The sequence spans 371 residues: Flagellar P-ring protein (371 aa).

Residues 1-28 form the signal peptide; it reads MPARPTPPAVPLALALAAALAAPAPAAA.

Belongs to the FlgI family. As to quaternary structure, the basal body constitutes a major portion of the flagellar organelle and consists of four rings (L,P,S, and M) mounted on a central rod.

The protein localises to the periplasm. It is found in the bacterial flagellum basal body. Its function is as follows. Assembles around the rod to form the L-ring and probably protects the motor/basal body from shearing forces during rotation. The sequence is that of Flagellar P-ring protein from Anaeromyxobacter dehalogenans (strain 2CP-C).